Reading from the N-terminus, the 571-residue chain is MASESSQSSSPSSSQPPSSVPSPSPGNNVGDTFIGSFISLISKYEIRYEGILYHLNVQDSTLGLKNVRSCGTEGRKKDGPQIPPCDKVYDYILFRGSDIKDLQVNPSPSAQSRQEIQSEQDVNQSPHSRPAMTMSSPISGYDSGYGLGRGSQWINTPALSSKPVPVTQHSSVPLSFQPPSANAGSLTESPVSLIDSTQSNAGSSMPIPSFVQGNKFASSGVPLGMMQKPVSSSSTIPNGPQIIDYFSSPIMGLVDDSSQVVTRSPDVSSNQSYSSNPSPLGQTQLHTPPGLASVSSNLSPPSEAQLSAPNIQKIYPSAPQAIGKVVYDPQSNHPHRSIPHELPAVASNSAPVIPGPLSKSPESFFDMDPSLQSRQQMVYRGQEMFAATNPASANVPSQSFAPRNHAPLLPLPVSAHQSRIPSSSIEYTEEFDFEAMNEKFKKSELWGYLGRNNQRNQNDYGEETAIEPNAEGKPAYNKDDFFDTISCNQLDRVARSGQQHNQFPEHMRQVPEAFGNNFQRPPPLQPGQGAYLAAQTNYRGGYHNNNNNNYYSNSGYGYYSGGRGRGRNTHF.

Over residues 1–17 (MASESSQSSSPSSSQPP) the composition is skewed to low complexity. 4 disordered regions span residues 1-27 (MASE…SPGN), 102-141 (LQVN…ISGY), 159-187 (LSSK…GSLT), and 258-305 (SQVV…SEAQ). Residues 25–108 (PGNNVGDTFI…IKDLQVNPSP (84 aa)) enclose the Sm domain. 2 stretches are compositionally biased toward polar residues: residues 104–138 (VNPS…SSPI) and 167–187 (TQHS…GSLT). Positions 264 to 279 (SPDVSSNQSYSSNPSP) are enriched in low complexity. Residues 293 to 305 (SVSSNLSPPSEAQ) show a composition bias toward polar residues. The region spanning 419–455 (RIPSSSIEYTEEFDFEAMNEKFKKSELWGYLGRNNQR) is the DFDF domain. The FFD box signature appears at 474-489 (PAYNKDDFFDTISCNQ). The TFG box motif lies at 498-518 (QQHNQFPEHMRQVPEAFGNNF).

This sequence belongs to the LSM14 family. As to quaternary structure, homodimer. Component of the decapping complex.

It is found in the cytoplasm. Its subcellular location is the P-body. Functionally, as a component of the decapping complex, involved in the degradation of mRNAs. Promotes P-body formation. Translational repressor. This chain is Decapping 5-like protein (DCP5-L), found in Arabidopsis thaliana (Mouse-ear cress).